A 295-amino-acid chain; its full sequence is Cytidine deaminase (295 aa).

2 CMP/dCMP-type deaminase domains span residues 48-168 (TDNQ…FGPS) and 187-295 (EDDD…YLSL). 89–91 (NME) is a binding site for substrate. His-102 provides a ligand contact to Zn(2+). Glu-104 serves as the catalytic Proton donor. Residues Cys-129 and Cys-132 each contribute to the Zn(2+) site.

Belongs to the cytidine and deoxycytidylate deaminase family. As to quaternary structure, homodimer. Zn(2+) serves as cofactor.

The enzyme catalyses cytidine + H2O + H(+) = uridine + NH4(+). It carries out the reaction 2'-deoxycytidine + H2O + H(+) = 2'-deoxyuridine + NH4(+). Its function is as follows. This enzyme scavenges exogenous and endogenous cytidine and 2'-deoxycytidine for UMP synthesis. In Vibrio vulnificus (strain YJ016), this protein is Cytidine deaminase.